A 304-amino-acid polypeptide reads, in one-letter code: Glycine--tRNA ligase alpha subunit (304 aa).

The protein belongs to the class-II aminoacyl-tRNA synthetase family. As to quaternary structure, tetramer of two alpha and two beta subunits.

The protein resides in the cytoplasm. The catalysed reaction is tRNA(Gly) + glycine + ATP = glycyl-tRNA(Gly) + AMP + diphosphate. This chain is Glycine--tRNA ligase alpha subunit, found in Streptococcus agalactiae serotype Ia (strain ATCC 27591 / A909 / CDC SS700).